A 261-amino-acid polypeptide reads, in one-letter code: Thiazole synthase (261 aa).

Catalysis depends on Lys95, which acts as the Schiff-base intermediate with DXP. Residues Gly156, 182 to 183 (AG), and 204 to 205 (NT) each bind 1-deoxy-D-xylulose 5-phosphate.

The protein belongs to the ThiG family. In terms of assembly, homotetramer. Forms heterodimers with either ThiH or ThiS.

Its subcellular location is the cytoplasm. The enzyme catalyses [ThiS sulfur-carrier protein]-C-terminal-Gly-aminoethanethioate + 2-iminoacetate + 1-deoxy-D-xylulose 5-phosphate = [ThiS sulfur-carrier protein]-C-terminal Gly-Gly + 2-[(2R,5Z)-2-carboxy-4-methylthiazol-5(2H)-ylidene]ethyl phosphate + 2 H2O + H(+). Its pathway is cofactor biosynthesis; thiamine diphosphate biosynthesis. Its function is as follows. Catalyzes the rearrangement of 1-deoxy-D-xylulose 5-phosphate (DXP) to produce the thiazole phosphate moiety of thiamine. Sulfur is provided by the thiocarboxylate moiety of the carrier protein ThiS. In vitro, sulfur can be provided by H(2)S. The sequence is that of Thiazole synthase from Pectobacterium carotovorum subsp. carotovorum (strain PC1).